A 125-amino-acid polypeptide reads, in one-letter code: Large ribosomal subunit protein bL12 (125 aa).

It belongs to the bacterial ribosomal protein bL12 family. As to quaternary structure, homodimer. Part of the ribosomal stalk of the 50S ribosomal subunit. Forms a multimeric L10(L12)X complex, where L10 forms an elongated spine to which 2 to 4 L12 dimers bind in a sequential fashion. Binds GTP-bound translation factors.

Its function is as follows. Forms part of the ribosomal stalk which helps the ribosome interact with GTP-bound translation factors. Is thus essential for accurate translation. The polypeptide is Large ribosomal subunit protein bL12 (Helicobacter acinonychis (strain Sheeba)).